A 218-amino-acid chain; its full sequence is MRLILLGAPGAGKGTQAAFICQKYGIPQISTGDMLRAAVKAGTPLGQQAKAVMESGGLVSDDLIINLVKERIAQPDCAGGFLFDGFPRTIPQADAMKAAGVKLDYVLEIDVPFSDIIERMSGRRSHPASGRTYHVKFNPPKVEGKDDITGEDLIQRKDDEEETVRKRLEVYSQQTRPLVDYYSAWAKADPASAPKYRAIQGVGSVEEIKQRALAALSS.

Position 10-15 (10-15 (GAGKGT)) interacts with ATP. Residues 30–59 (STGDMLRAAVKAGTPLGQQAKAVMESGGLV) are NMP. Residues threonine 31, arginine 36, 57 to 59 (GLV), 85 to 88 (GFPR), and glutamine 92 each bind AMP. The tract at residues 122–159 (GRRSHPASGRTYHVKFNPPKVEGKDDITGEDLIQRKDD) is LID. Residues arginine 123 and 132–133 (TY) each bind ATP. AMP-binding residues include arginine 156 and arginine 167. Glycine 203 contacts ATP.

Belongs to the adenylate kinase family. Monomer.

It localises to the cytoplasm. The catalysed reaction is AMP + ATP = 2 ADP. It functions in the pathway purine metabolism; AMP biosynthesis via salvage pathway; AMP from ADP: step 1/1. Functionally, catalyzes the reversible transfer of the terminal phosphate group between ATP and AMP. Plays an important role in cellular energy homeostasis and in adenine nucleotide metabolism. The sequence is that of Adenylate kinase from Variovorax paradoxus (strain S110).